Here is a 358-residue protein sequence, read N- to C-terminus: Ribosomal RNA large subunit methyltransferase M (358 aa).

S-adenosyl-L-methionine is bound by residues Ser-187, 220 to 223 (CPGG), Asp-239, Asp-259, and Asp-276. Lys-305 functions as the Proton acceptor in the catalytic mechanism.

This sequence belongs to the class I-like SAM-binding methyltransferase superfamily. RNA methyltransferase RlmE family. RlmM subfamily. In terms of assembly, monomer.

The protein localises to the cytoplasm. The catalysed reaction is cytidine(2498) in 23S rRNA + S-adenosyl-L-methionine = 2'-O-methylcytidine(2498) in 23S rRNA + S-adenosyl-L-homocysteine + H(+). Catalyzes the 2'-O-methylation at nucleotide C2498 in 23S rRNA. In Shewanella woodyi (strain ATCC 51908 / MS32), this protein is Ribosomal RNA large subunit methyltransferase M.